We begin with the raw amino-acid sequence, 511 residues long: Histidine ammonia-lyase (511 aa).

Positions 142–144 (ASG) form a cross-link, 5-imidazolinone (Ala-Gly). Ser-143 is subject to 2,3-didehydroalanine (Ser).

Belongs to the PAL/histidase family. Post-translationally, contains an active site 4-methylidene-imidazol-5-one (MIO), which is formed autocatalytically by cyclization and dehydration of residues Ala-Ser-Gly.

It localises to the cytoplasm. It catalyses the reaction L-histidine = trans-urocanate + NH4(+). It functions in the pathway amino-acid degradation; L-histidine degradation into L-glutamate; N-formimidoyl-L-glutamate from L-histidine: step 1/3. The sequence is that of Histidine ammonia-lyase from Brucella suis (strain ATCC 23445 / NCTC 10510).